The primary structure comprises 305 residues: Putative lipid kinase USA300HOU_0749 (305 aa).

The DAGKc domain occupies 3–139 (NKYTHGVLFY…YDVIKINNQY (137 aa)). ATP-binding positions include Ser44, 74–80 (GDGTVNE), and Thr101. Mg(2+)-binding residues include Ser220, Asp223, and Glu225. Residue Glu281 is the Proton acceptor of the active site.

This sequence belongs to the diacylglycerol/lipid kinase family. Requires Mg(2+) as cofactor.

May catalyze the ATP-dependent phosphorylation of lipids other than diacylglycerol (DAG). The sequence is that of Putative lipid kinase USA300HOU_0749 from Staphylococcus aureus (strain USA300 / TCH1516).